Here is a 250-residue protein sequence, read N- to C-terminus: MECDKVGDLLLTSTYAIAFTGAGISTASGIPDFRGPNGLWKKYSPELATIEYFKKDPKGFWEFYRLRMRGLFTALPNRAHYALAELEKMGLIRAIITQNIDGLHQLAGSRNVIELHGNMRKCYCVNCLKTYDSDTVLDKIDKEGLPPKCECGGVIRPDVVLFGEPVYNISSALEIAREADLVLAIGSSLTVYPANMIPLTVKEMGGKLIILNAEETPLDNIADIVVRERVEEFLPCVVDYIKSQTLHRSS.

In terms of domain architecture, Deacetylase sirtuin-type spans 1–244 (MECDKVGDLL…PCVVDYIKSQ (244 aa)). Alanine 22, threonine 26, phenylalanine 33, arginine 34, glutamine 98, isoleucine 100, aspartate 101, and histidine 116 together coordinate NAD(+). Residue phenylalanine 33 coordinates nicotinamide. The nicotinamide site is built by isoleucine 100 and aspartate 101. The Proton acceptor role is filled by histidine 116. 4 residues coordinate Zn(2+): cysteine 124, cysteine 127, cysteine 149, and cysteine 151. NAD(+) is bound by residues serine 187, serine 188, asparagine 212, and valine 230.

Belongs to the sirtuin family. Class U subfamily. The cofactor is Zn(2+).

Its subcellular location is the cytoplasm. The enzyme catalyses N(6)-acetyl-L-lysyl-[protein] + NAD(+) + H2O = 2''-O-acetyl-ADP-D-ribose + nicotinamide + L-lysyl-[protein]. NAD-dependent protein deacetylase which modulates the activities of several enzymes which are inactive in their acetylated form. Deacetylates the N-terminal lysine residue of Alba, the major archaeal chromatin protein and that, in turn, increases Alba's DNA binding affinity, thereby repressing transcription. This chain is NAD-dependent protein deacetylase, found in Sulfurisphaera tokodaii (strain DSM 16993 / JCM 10545 / NBRC 100140 / 7) (Sulfolobus tokodaii).